We begin with the raw amino-acid sequence, 265 residues long: Orotidine 5'-phosphate decarboxylase (265 aa).

Substrate-binding positions include Asp-37, 59-61 (KTH), 91-100 (DRKFADIGNT), Tyr-217, and Arg-235. The Proton donor role is filled by Lys-93.

This sequence belongs to the OMP decarboxylase family.

The catalysed reaction is orotidine 5'-phosphate + H(+) = UMP + CO2. The protein operates within pyrimidine metabolism; UMP biosynthesis via de novo pathway; UMP from orotate: step 2/2. The protein is Orotidine 5'-phosphate decarboxylase (URA3) of Candida glabrata (strain ATCC 2001 / BCRC 20586 / JCM 3761 / NBRC 0622 / NRRL Y-65 / CBS 138) (Yeast).